The chain runs to 267 residues: MTIPAFGLGTFRLKDDVVIASVKTALELGYRAVDTAQIYDNEAAVGQAIAESGVPRNELYITTKIWIENLSKDKLIPSLKESLKKLRTDYVDLTLIHWPSPGDAVSVEEFMQALLEAKKQGLTREIGISNFTIPLMEKAIAAVGADNIATNQIELSPYLQNRKVVDWAKAHGIHITSYMTLAYGKALKDEVIARIAAKHNATPAQVILAWAMGEGYSVIPSSTRRENLASSLLAQDLHLDAEDKNAIAALDCNDRLVSPEGLAPAWD.

The Proton donor role is filled by tyrosine 39. Residue histidine 97 participates in substrate binding. Methionine 179 to serine 231 lines the NADP(+) pocket.

The protein belongs to the aldo/keto reductase family. As to quaternary structure, monomer.

It localises to the cytoplasm. The catalysed reaction is hydroxyacetone + NADP(+) = methylglyoxal + NADPH + H(+). In terms of biological role, aldo-keto reductase that significantly contributes to cellular methylglyoxal detoxification by catalyzing the NADPH-dependent conversion of methylglyoxal to acetol. The chain is Methylglyoxal reductase DkgB from Salmonella typhimurium (strain LT2 / SGSC1412 / ATCC 700720).